A 141-amino-acid chain; its full sequence is Hemoglobin subunit alpha-D (141 aa).

One can recognise a Globin domain in the interval 1-141 (MLSADDKKII…VAAVLAEKYR (141 aa)). Histidine 58 and histidine 87 together coordinate heme b.

This sequence belongs to the globin family. As to quaternary structure, heterotetramer of two alpha-D chains and two beta chains. In terms of tissue distribution, red blood cells.

Functionally, involved in oxygen transport from the lung to the various peripheral tissues. The protein is Hemoglobin subunit alpha-D (HBAD) of Anser indicus (Bar-headed goose).